Reading from the N-terminus, the 210-residue chain is Thymidylate kinase (210 aa).

Position 10-17 (10-17 (GGEGAGKS)) interacts with ATP.

It belongs to the thymidylate kinase family.

It catalyses the reaction dTMP + ATP = dTDP + ADP. In terms of biological role, phosphorylation of dTMP to form dTDP in both de novo and salvage pathways of dTTP synthesis. In Magnetococcus marinus (strain ATCC BAA-1437 / JCM 17883 / MC-1), this protein is Thymidylate kinase.